Consider the following 838-residue polypeptide: Periplasmic nitrate reductase (838 aa).

The tat-type signal signal peptide spans 1–29 (MKVSRRAFIKQTAAAATASVAGVTLPAGA). Residues 41–97 (LKWSKAPCRFCGTGCGVEVAVKDNRVVATQGDPKAEVNRGLNCVKGYFLSKIMYGKD) form the 4Fe-4S Mo/W bis-MGD-type domain. Residues cysteine 48, cysteine 51, cysteine 55, and cysteine 83 each contribute to the [4Fe-4S] cluster site. Residues lysine 85, glutamine 152, asparagine 177, cysteine 181, 214 to 221 (WGSNMAEM), 245 to 249 (STFTH), methionine 382, glutamine 386, asparagine 492, 518 to 519 (SD), lysine 541, aspartate 568, and 728 to 737 (TGRVLEHWHS) each bind Mo-bis(molybdopterin guanine dinucleotide). Position 804 (tryptophan 804) interacts with substrate. Mo-bis(molybdopterin guanine dinucleotide) is bound by residues asparagine 812 and lysine 829.

This sequence belongs to the prokaryotic molybdopterin-containing oxidoreductase family. NasA/NapA/NarB subfamily. As to quaternary structure, component of the periplasmic nitrate reductase NapAB complex composed of NapA and NapB. Requires [4Fe-4S] cluster as cofactor. Mo-bis(molybdopterin guanine dinucleotide) is required as a cofactor. In terms of processing, predicted to be exported by the Tat system. The position of the signal peptide cleavage has not been experimentally proven.

The protein resides in the periplasm. It catalyses the reaction 2 Fe(II)-[cytochrome] + nitrate + 2 H(+) = 2 Fe(III)-[cytochrome] + nitrite + H2O. Its function is as follows. Catalytic subunit of the periplasmic nitrate reductase complex NapAB. Receives electrons from NapB and catalyzes the reduction of nitrate to nitrite. This chain is Periplasmic nitrate reductase, found in Ralstonia pickettii (strain 12J).